Consider the following 59-residue polypeptide: Large ribosomal subunit protein bL32 (59 aa).

The disordered stretch occupies residues 1–25; that stretch reads MAVQQNKKSPSKRGMHRSHDFLNAA.

It belongs to the bacterial ribosomal protein bL32 family.

This is Large ribosomal subunit protein bL32 from Paraburkholderia phymatum (strain DSM 17167 / CIP 108236 / LMG 21445 / STM815) (Burkholderia phymatum).